A 284-amino-acid chain; its full sequence is MKNLENLEKDLKNDLKKDLKKEKPILVSFLVSGDPNIEATLKFMNALDEYCGVIELGIPFSDPIADGSTIQEANVRSLSNGYKIHQSFDVLREFRKFSDTPVVLMTYYNPIYKRGIENFVIQAKEAGANGLIIVDLPLDEAEQYRAICKKHDMGTVFLVAPNTPDERLMYSDEASTLFLYVISTFGITGARGSFEKMTFEFIARAKNLCDKNKLYVGFGISNGEHAEKIIENGADGVIVGSAFVDIIKEYGDSNETIYKLKELARELSEGIHKGYVKYNEKNKY.

Active-site proton acceptor residues include Glu-55 and Asp-66.

Belongs to the TrpA family. In terms of assembly, tetramer of two alpha and two beta chains.

The enzyme catalyses (1S,2R)-1-C-(indol-3-yl)glycerol 3-phosphate + L-serine = D-glyceraldehyde 3-phosphate + L-tryptophan + H2O. It participates in amino-acid biosynthesis; L-tryptophan biosynthesis; L-tryptophan from chorismate: step 5/5. Functionally, the alpha subunit is responsible for the aldol cleavage of indoleglycerol phosphate to indole and glyceraldehyde 3-phosphate. In Methanococcus voltae, this protein is Tryptophan synthase alpha chain.